The following is a 925-amino-acid chain: Protein translocase subunit SecA (925 aa).

Residues Q87, 105 to 109 (GEGKT), and D515 each bind ATP. Residues C909, C911, C920, and H921 each coordinate Zn(2+).

It belongs to the SecA family. In terms of assembly, monomer and homodimer. Part of the essential Sec protein translocation apparatus which comprises SecA, SecYEG and auxiliary proteins SecDF-YajC and YidC. Zn(2+) is required as a cofactor.

Its subcellular location is the cell inner membrane. It localises to the cytoplasm. It catalyses the reaction ATP + H2O + cellular proteinSide 1 = ADP + phosphate + cellular proteinSide 2.. In terms of biological role, part of the Sec protein translocase complex. Interacts with the SecYEG preprotein conducting channel. Has a central role in coupling the hydrolysis of ATP to the transfer of proteins into and across the cell membrane, serving both as a receptor for the preprotein-SecB complex and as an ATP-driven molecular motor driving the stepwise translocation of polypeptide chains across the membrane. The protein is Protein translocase subunit SecA of Cupriavidus necator (strain ATCC 17699 / DSM 428 / KCTC 22496 / NCIMB 10442 / H16 / Stanier 337) (Ralstonia eutropha).